Reading from the N-terminus, the 396-residue chain is Na(+)/H(+) antiporter NhaA (396 aa).

Transmembrane regions (helical) follow at residues 17-37 (FSGLLLILFCFLAIFISNTNF), 59-79 (FSLTNIVNDILMTFFFLEIGI), 97-117 (ILPGIAAIGGMIFPALIYNFI), 127-147 (GWAITVATDIAFAVGVLKILG), 156-176 (IFLLSLAIFDDIGAILIIAFF), 181-201 (IDQYMILLSTLVILTILSINY), 206-226 (CIYIYIIFGILLWESIFLSGI), 260-280 (SLSFLNKYFILPIFAFFNSGI), 292-312 (LLPFGIFFGLVLGKPIGVFLF), 333-353 (IAGISFLCGIGFTMSIFISNL), and 368-388 (FSILISSIVSSVIGFLFLYFL).

Belongs to the NhaA Na(+)/H(+) (TC 2.A.33) antiporter family.

The protein resides in the cell membrane. It catalyses the reaction Na(+)(in) + 2 H(+)(out) = Na(+)(out) + 2 H(+)(in). Na(+)/H(+) antiporter that extrudes sodium in exchange for external protons. This Wigglesworthia glossinidia brevipalpis protein is Na(+)/H(+) antiporter NhaA.